The following is a 141-amino-acid chain: Large ribosomal subunit protein uL11 (141 aa).

Belongs to the universal ribosomal protein uL11 family. In terms of assembly, part of the ribosomal stalk of the 50S ribosomal subunit. Interacts with L10 and the large rRNA to form the base of the stalk. L10 forms an elongated spine to which L12 dimers bind in a sequential fashion forming a multimeric L10(L12)X complex. In terms of processing, one or more lysine residues are methylated.

Functionally, forms part of the ribosomal stalk which helps the ribosome interact with GTP-bound translation factors. This Carboxydothermus hydrogenoformans (strain ATCC BAA-161 / DSM 6008 / Z-2901) protein is Large ribosomal subunit protein uL11.